The following is a 209-amino-acid chain: Ribosomal RNA small subunit methyltransferase G (209 aa).

S-adenosyl-L-methionine is bound by residues Gly75, Leu80, Val126 to Glu127, and Arg141.

It belongs to the methyltransferase superfamily. RNA methyltransferase RsmG family.

Its subcellular location is the cytoplasm. The enzyme catalyses guanosine(527) in 16S rRNA + S-adenosyl-L-methionine = N(7)-methylguanosine(527) in 16S rRNA + S-adenosyl-L-homocysteine. Its function is as follows. Specifically methylates the N7 position of guanine in position 527 of 16S rRNA. This is Ribosomal RNA small subunit methyltransferase G from Colwellia psychrerythraea (strain 34H / ATCC BAA-681) (Vibrio psychroerythus).